The sequence spans 517 residues: NEDD8-activating enzyme E1 regulatory subunit (517 aa).

This sequence belongs to the ubiquitin-activating E1 family. ULA1 subfamily. Heterodimer of uba3 and ula1. The complex binds NEDD8/ubl1 and ubc12.

The protein resides in the cytoplasm. It localises to the nucleus. It functions in the pathway protein modification; protein neddylation. In terms of biological role, regulatory subunit of the dimeric uba3-ula1 E1 enzyme. E1 activates NEDD8/ubl1 by first adenylating its C-terminal glycine residue with ATP, thereafter linking this residue to the side chain of the catalytic cysteine, yielding a NEDD8-UBA3 thioester and free AMP. E1 finally transfers NEDD8 to the catalytic cysteine of ubc12. This Schizosaccharomyces pombe (strain 972 / ATCC 24843) (Fission yeast) protein is NEDD8-activating enzyme E1 regulatory subunit (uba5).